Consider the following 319-residue polypeptide: CD2 antigen cytoplasmic tail-binding protein 2 homolog (319 aa).

Disordered stretches follow at residues 1 to 57 (MASK…EDDV) and 105 to 124 (NAFDPAKDEENSSDEEKNEP). Residues 12–24 (KVKEESFKKHTLD) show a composition bias toward basic and acidic residues. Residues S25 and S30 each carry the phosphoserine modification. Over residues 25 to 47 (SDEEDSDDYEREYLNDSDIEGGE) the composition is skewed to acidic residues. Residue Y37 is modified to Phosphotyrosine. S41 is modified (phosphoserine). Residues 109 to 124 (PAKDEENSSDEEKNEP) are compositionally biased toward basic and acidic residues. The GYF domain occupies 260 to 316 (EVTWEFKWSQDETDIQGPFSTEKMLKWSQENYFKNGVYVRKCGENTNFYTSNRIDFD).

It is found in the nucleus. Its function is as follows. Required for embryonic epithelial tissue repair, but not for the assembly of the actomyosin cable at the wound edge. Probably acts downstream of rl in the regulation of Ddc and msn transcription to promote wound healing. This is CD2 antigen cytoplasmic tail-binding protein 2 homolog (holn1) from Drosophila melanogaster (Fruit fly).